Consider the following 255-residue polypeptide: Triosephosphate isomerase (255 aa).

9-11 (NWK) is a binding site for substrate. The active-site Electrophile is His96. The Proton acceptor role is filled by Glu170. Substrate-binding positions include Gly176, Ser216, and 237–238 (GG).

This sequence belongs to the triosephosphate isomerase family. As to quaternary structure, homodimer.

It localises to the cytoplasm. The enzyme catalyses D-glyceraldehyde 3-phosphate = dihydroxyacetone phosphate. It functions in the pathway carbohydrate biosynthesis; gluconeogenesis. The protein operates within carbohydrate degradation; glycolysis; D-glyceraldehyde 3-phosphate from glycerone phosphate: step 1/1. Involved in the gluconeogenesis. Catalyzes stereospecifically the conversion of dihydroxyacetone phosphate (DHAP) to D-glyceraldehyde-3-phosphate (G3P). This is Triosephosphate isomerase from Magnetococcus marinus (strain ATCC BAA-1437 / JCM 17883 / MC-1).